Here is a 364-residue protein sequence, read N- to C-terminus: Probable dual-specificity RNA methyltransferase RlmN (364 aa).

Glu107 (proton acceptor) is an active-site residue. The Radical SAM core domain occupies 113–346; that stretch reads HNYGNSVCVT…VTIRREHGHD (234 aa). Cysteines 120 and 351 form a disulfide. Residues Cys127, Cys131, and Cys134 each contribute to the [4Fe-4S] cluster site. Residues 177–178, Ser209, 232–234, and Asn308 contribute to the S-adenosyl-L-methionine site; these read GE and SLH. The active-site S-methylcysteine intermediate is the Cys351.

It belongs to the radical SAM superfamily. RlmN family. [4Fe-4S] cluster serves as cofactor.

The protein localises to the cytoplasm. The enzyme catalyses adenosine(2503) in 23S rRNA + 2 reduced [2Fe-2S]-[ferredoxin] + 2 S-adenosyl-L-methionine = 2-methyladenosine(2503) in 23S rRNA + 5'-deoxyadenosine + L-methionine + 2 oxidized [2Fe-2S]-[ferredoxin] + S-adenosyl-L-homocysteine. It catalyses the reaction adenosine(37) in tRNA + 2 reduced [2Fe-2S]-[ferredoxin] + 2 S-adenosyl-L-methionine = 2-methyladenosine(37) in tRNA + 5'-deoxyadenosine + L-methionine + 2 oxidized [2Fe-2S]-[ferredoxin] + S-adenosyl-L-homocysteine. In terms of biological role, specifically methylates position 2 of adenine 2503 in 23S rRNA and position 2 of adenine 37 in tRNAs. The protein is Probable dual-specificity RNA methyltransferase RlmN of Geobacillus thermodenitrificans (strain NG80-2).